The chain runs to 685 residues: DNA topoisomerase 4 subunit B (685 aa).

Residues 389-400 show a composition bias toward basic and acidic residues; it reads EAARKAREESRN. Residues 389–427 are disordered; the sequence is EAARKAREESRNGKKRKKGESLLSGKLTPAQSRNPKKNE. One can recognise a Toprim domain in the interval 426–540; that stretch reads NELYLVEGDS…AGKVYIALPP (115 aa). Mg(2+) is bound by residues glutamate 432, aspartate 505, and aspartate 507. 2 stretches are compositionally biased toward acidic residues: residues 644-654 and 673-685; these read GSILDRSEEDT and QTDD…FDIE. Residues 644–685 are disordered; the sequence is GSILDRSEEDTSAPTGESLLDAEKTKEAEQTDDTEISLFDIE.

It belongs to the type II topoisomerase family. ParE type 1 subfamily. As to quaternary structure, heterotetramer composed of ParC and ParE. Mg(2+) serves as cofactor. The cofactor is Mn(2+). Requires Ca(2+) as cofactor.

The catalysed reaction is ATP-dependent breakage, passage and rejoining of double-stranded DNA.. Its activity is regulated as follows. Pyrrolopyrimidines inhibit both GyrB and its paralog in topoisomerase IV (parE). Its function is as follows. Topoisomerase IV is essential for chromosome segregation. It relaxes supercoiled DNA. Performs the decatenation events required during the replication of a circular DNA molecule. The chain is DNA topoisomerase 4 subunit B from Enterococcus faecalis (strain ATCC 700802 / V583).